The sequence spans 285 residues: NAD kinase (285 aa).

Residue Asp67 is the Proton acceptor of the active site. Residues 67–68, 141–142, Arg152, Lys169, Asp171, 182–187, and Gln242 contribute to the NAD(+) site; these read DG, ND, and TGYSLS.

It belongs to the NAD kinase family. It depends on a divalent metal cation as a cofactor.

The protein localises to the cytoplasm. It catalyses the reaction NAD(+) + ATP = ADP + NADP(+) + H(+). Involved in the regulation of the intracellular balance of NAD and NADP, and is a key enzyme in the biosynthesis of NADP. Catalyzes specifically the phosphorylation on 2'-hydroxyl of the adenosine moiety of NAD to yield NADP. The chain is NAD kinase from Trichlorobacter lovleyi (strain ATCC BAA-1151 / DSM 17278 / SZ) (Geobacter lovleyi).